The sequence spans 703 residues: UvrABC system protein B (703 aa).

The region spanning 33-190 (TRIENGENDV…RRFVAMQYKR (158 aa)) is the Helicase ATP-binding domain. Residue 46-53 (GATGTGKT) coordinates ATP. A Beta-hairpin motif is present at residues 99–122 (YYDYYQPEAYIPQTDTYIEKDSNI). Residues 436 to 589 (QIDDLLAEIK…QIAYNQEHGI (154 aa)) form the Helicase C-terminal domain. The UVR domain occupies 659–694 (ADLIRQLSEQMHTAAEQLQFELAARLRDEIRDLKKE).

It belongs to the UvrB family. In terms of assembly, forms a heterotetramer with UvrA during the search for lesions. Interacts with UvrC in an incision complex.

The protein localises to the cytoplasm. Its function is as follows. The UvrABC repair system catalyzes the recognition and processing of DNA lesions. A damage recognition complex composed of 2 UvrA and 2 UvrB subunits scans DNA for abnormalities. Upon binding of the UvrA(2)B(2) complex to a putative damaged site, the DNA wraps around one UvrB monomer. DNA wrap is dependent on ATP binding by UvrB and probably causes local melting of the DNA helix, facilitating insertion of UvrB beta-hairpin between the DNA strands. Then UvrB probes one DNA strand for the presence of a lesion. If a lesion is found the UvrA subunits dissociate and the UvrB-DNA preincision complex is formed. This complex is subsequently bound by UvrC and the second UvrB is released. If no lesion is found, the DNA wraps around the other UvrB subunit that will check the other stand for damage. In Bifidobacterium longum subsp. infantis (strain ATCC 15697 / DSM 20088 / JCM 1222 / NCTC 11817 / S12), this protein is UvrABC system protein B.